The primary structure comprises 311 residues: 4-hydroxy-tetrahydrodipicolinate synthase (311 aa).

Thr-51 contributes to the pyruvate binding site. Tyr-140 (proton donor/acceptor) is an active-site residue. The Schiff-base intermediate with substrate role is filled by Lys-168. Ile-209 serves as a coordination point for pyruvate.

Belongs to the DapA family. Homotetramer; dimer of dimers.

It localises to the cytoplasm. The catalysed reaction is L-aspartate 4-semialdehyde + pyruvate = (2S,4S)-4-hydroxy-2,3,4,5-tetrahydrodipicolinate + H2O + H(+). It functions in the pathway amino-acid biosynthesis; L-lysine biosynthesis via DAP pathway; (S)-tetrahydrodipicolinate from L-aspartate: step 3/4. Catalyzes the condensation of (S)-aspartate-beta-semialdehyde [(S)-ASA] and pyruvate to 4-hydroxy-tetrahydrodipicolinate (HTPA). This Streptococcus pneumoniae (strain 70585) protein is 4-hydroxy-tetrahydrodipicolinate synthase.